The primary structure comprises 348 residues: Mitogen-activated protein kinase kinase 5 (348 aa).

2 disordered regions span residues 1 to 26 and 35 to 54; these read MKPI…DLSL and LAVP…PASS. Serine 6 bears the Phosphoserine; by ASK7 mark. The region spanning 70-325 is the Protein kinase domain; sequence LERVNRIGSG…AQQLLQHPFI (256 aa). ATP is bound by residues 76–84 and lysine 99; that span reads IGSGAGGTV. The Proton acceptor role is filled by aspartate 187. At threonine 215 the chain carries Phosphothreonine. Serine 221 is modified (phosphoserine; by ASK7). A Phosphoserine modification is found at serine 221. At threonine 225 the chain carries Phosphothreonine; by ASK7. Arginine 313 carries the ADP-ribosylarginine; by HopF2 modification.

It belongs to the protein kinase superfamily. STE Ser/Thr protein kinase family. MAP kinase kinase subfamily. In terms of assembly, interacts with P.syringae type III effector HopF2. Interacts with BZR1. Interacts with MPK6 and MPK3. Interacts with RACK1A, RACK1B and RACK1C. Interacts with MAPKKK5 mainly in the cytosol. Binds to BASL. Interacts with MAPKKK20. Phosphorylation at Thr-215 and Ser-221 by MAP kinase kinase kinases positively regulates kinase activity. Phosphorylated by MAPKKK5 and MAPKKK20 in response to abscisic acid (ABA). In terms of processing, ADP-ribosylation at Arg-313 by P.syringae type III effector HopF2 reduces the ability of the protein to phosphorylate downstream MPK6. Expressed higher in stems and leaves than in flowers and roots.

It carries out the reaction L-seryl-[protein] + ATP = O-phospho-L-seryl-[protein] + ADP + H(+). It catalyses the reaction L-threonyl-[protein] + ATP = O-phospho-L-threonyl-[protein] + ADP + H(+). The catalysed reaction is L-tyrosyl-[protein] + ATP = O-phospho-L-tyrosyl-[protein] + ADP + H(+). Activated through serine and threonine phosphorylation by MEKK1 and MAPKKK20 in response to abscisic acid (ABA). Inhibited through phosphorylation by GSK3/Shaggy-like kinase ASKs. Inhibited through ADP-Ribosylation by P.syringae HopF2. Activated after high light stress. Functionally, mitogen-activated protein kinase kinase (MAPKK) which regulates abscisic acid (ABA) responses in a MAPKKK20-MKK5-MPK6 cascade involved in root growth (e.g. root cell division and elongation) and stomatal response, probably via MAPK6 activation by protein phosphorylation. Involved in the second phase of hydrogen peroxide generation during hypersensitive response-like cell death. Involved in the innate immune MAP kinase signaling cascade (MEKK1, MKK4/MKK5 and MPK3/MPK6) downstream of bacterial flagellin receptor FLS2. Activates by phosphorylation the downstream MPK3 and MPK6. YDA-MKK4/MKK5-MPK3/MPK6 module regulates stomatal cell fate before the guard mother cell (GMC) is specified. This MAPK cascade also functions downstream of the ER receptor in regulating coordinated local cell proliferation, which shapes the morphology of plant organs. MKK4 and MKK5 participate in the regulation of floral organ abscission. Target of the Pseudomonas syringae type III effector HopF2, that inhibits the activation of the downstream MPK6 and PAMP-triggered immunity. Plays a critical role in high light stress tolerance by the mediation of the Cu/Zn SODs CSD1 and CSD2 gene expression. Phosphorylates BZR1 in vitro. The chain is Mitogen-activated protein kinase kinase 5 from Arabidopsis thaliana (Mouse-ear cress).